We begin with the raw amino-acid sequence, 386 residues long: Sulfate adenylyltransferase (386 aa).

This sequence belongs to the sulfate adenylyltransferase family.

The enzyme catalyses sulfate + ATP + H(+) = adenosine 5'-phosphosulfate + diphosphate. Its pathway is sulfur metabolism; hydrogen sulfide biosynthesis; sulfite from sulfate: step 1/3. The polypeptide is Sulfate adenylyltransferase (Persephonella marina (strain DSM 14350 / EX-H1)).